The sequence spans 227 residues: MPENPSSSPTEPPEQSAAFEKWRSGLAQFTGLGLSESEKAERERLKAQGKLAKDWDKCEGWKRDLMNYSPMITFLLNHLKLAGCPFPSSAMQCHPCPENRAGGFSPDHGILLCQDRFFNKKHMEDTLAHELVHAFDHCRFKVDWGNLRHHACSEIRAANLSGDCRFTREVKRGFYAFNKQHQACVKRRAILSVLANPACTSPEMAEKAVNEVWESCFTDTRPFDEIY.

His-129 is a binding site for a divalent metal cation. Residue Glu-130 is part of the active site. Residue His-133 coordinates a divalent metal cation.

It belongs to the peptidase M76 family.

It is found in the mitochondrion inner membrane. Its function is as follows. Has a dual role in the assembly of mitochondrial ATPase. Acts as a protease that removes N-terminal residues of mitochondrial ATPase CF(0) subunit 6 at the intermembrane space side. Also involved in the correct assembly of the membrane-embedded ATPase CF(0) particle, probably mediating association of subunit 6 with the subunit 9 ring. In Cryptococcus neoformans var. neoformans serotype D (strain JEC21 / ATCC MYA-565) (Filobasidiella neoformans), this protein is Mitochondrial inner membrane protease ATP23 (ATP23).